We begin with the raw amino-acid sequence, 344 residues long: Leucine-rich repeat-containing protein 75A (344 aa).

The tract at residues 1-25 (MGTRQTKGSLAERASPGAAPGPRRE) is disordered. Over residues 11–21 (AERASPGAAPG) the composition is skewed to low complexity. LRR repeat units follow at residues 204–217 (VDSV…LTDD) and 229–242 (LPRL…GNRL). The segment at 295-344 (LPTILELGEGPGSGEEVREGTVGQEDPGGGPVAPAEDHHEGKETVAAAQT) is disordered.

The protein belongs to the LRRC75 family.

This is Leucine-rich repeat-containing protein 75A (LRRC75A) from Homo sapiens (Human).